Reading from the N-terminus, the 93-residue chain is UPF0358 protein lmo1070 (93 aa).

Belongs to the UPF0358 family.

The chain is UPF0358 protein lmo1070 from Listeria monocytogenes serovar 1/2a (strain ATCC BAA-679 / EGD-e).